The primary structure comprises 603 residues: F-box only protein 46 (603 aa).

Residues 18–54 (SKYSQNQPRPPSTALKPPVCPDTSSGTEPDHRPAHLE) are disordered. Residues Ser-21 and Ser-67 each carry the phosphoserine modification. Disordered stretches follow at residues 113–165 (SRAS…SSGD), 235–301 (EAQR…TRAK), 332–359 (EASE…ARDC), and 412–442 (QSRG…GTTD). Thr-347 is subject to Phosphothreonine. 2 stretches are compositionally biased toward pro residues: residues 347–356 (TPPAPPPPPA) and 417–426 (EGPPEPPPAD). The F-box domain occupies 470-522 (RQYMLLLPEHVLVKIFSFLPTRALAALKCTCHHFKGIIEAFGVRATDSRWSRD).

As to quaternary structure, part of a SCF (SKP1-cullin-F-box) protein ligase complex SCF(FBXO46) composed of CUL1, SKP1, RBX1 and FBXO46. In terms of processing, phosphorylated by ATM in response to DNA damage, promoting ubiquitination and degradation by the SCF(FBXO31) complex. Post-translationally, ATM-phosphorylated FBXO46 is ubiquitinated and degradaded by the SCF(FBXO31) complex in response to DNA damage.

The protein operates within protein modification; protein ubiquitination. Functionally, substrate-recognition component of the SCF(FBXO46) protein ligase complex, which mediates the ubiquitination and degradation of target proteins. In absence of stress, the SCF(FBXO46) complex catalyzes ubiquitination and degradation of MTOR-phosphorylated FBXO31. The polypeptide is F-box only protein 46 (Fbxo46) (Mus musculus (Mouse)).